Here is a 59-residue protein sequence, read N- to C-terminus: Large ribosomal subunit protein uL30 (59 aa).

It belongs to the universal ribosomal protein uL30 family. In terms of assembly, part of the 50S ribosomal subunit.

This chain is Large ribosomal subunit protein uL30, found in Geotalea daltonii (strain DSM 22248 / JCM 15807 / FRC-32) (Geobacter daltonii).